A 94-amino-acid chain; its full sequence is DNA-directed RNA polymerase subunit omega (94 aa).

It belongs to the RNA polymerase subunit omega family. The RNAP catalytic core consists of 2 alpha, 1 beta, 1 beta' and 1 omega subunit. When a sigma factor is associated with the core the holoenzyme is formed, which can initiate transcription.

The enzyme catalyses RNA(n) + a ribonucleoside 5'-triphosphate = RNA(n+1) + diphosphate. Its function is as follows. Promotes RNA polymerase assembly. Latches the N- and C-terminal regions of the beta' subunit thereby facilitating its interaction with the beta and alpha subunits. The sequence is that of DNA-directed RNA polymerase subunit omega from Bifidobacterium animalis subsp. lactis (strain AD011).